The sequence spans 592 residues: Ferric-chelate reductase 1 (592 aa).

Residues 2–22 (AVSGFTLGTCILLLHISYVAN) traverse the membrane as a helical segment. Residues 13 to 179 (LLLHISYVAN…FTTPKATVVP (167 aa)) enclose the Reelin domain. Asparagine 138, asparagine 308, and asparagine 321 each carry an N-linked (GlcNAc...) asparagine glycan. Residues 216 to 331 (EASCVFLSFT…TSYYIFLADG (116 aa)) enclose the DOMON domain. The Cytochrome b561 domain occupies 335-534 (DGRIYKHSQQ…VGTEVVLEVH (200 aa)). The helical transmembrane segment at 372 to 392 (VHGALMFVAWMTTVSIGVLVA) threads the bilayer. 2 residues coordinate heme b: histidine 373 and histidine 414. Helical transmembrane passes span 415 to 435 (RMLMFTTTVLTCIAFVMPFIY) and 446 to 466 (HPYLGCIVMTLAVLQPLLAVF). Histidine 446 and histidine 482 together coordinate heme b. Helical transmembrane passes span 491 to 511 (IIAVAAMFLGMDLPGLNLPDS), 515 to 535 (YAMTGFVAWHVGTEVVLEVHA), and 569 to 589 (AVLAIYVCGNVTFLIIFLSAI).

This sequence belongs to the FRRS1 family. Requires heme b as cofactor.

The protein localises to the membrane. In terms of biological role, ferric-chelate reductases reduce Fe(3+) to Fe(2+) before its transport from the endosome to the cytoplasm. This chain is Ferric-chelate reductase 1 (FRRS1), found in Homo sapiens (Human).